The sequence spans 1090 residues: Protein unc-13 homolog D (1090 aa).

A C2 1 domain is found at 92-239; it reads EPEEHQQTLQ…FKEARKDKGQ (148 aa). Ca(2+) contacts are provided by Asp127 and Asp133. Phosphoserine is present on Ser150. Ca(2+) contacts are provided by Asp206 and Asp208. Positions 240–543 are interaction with RAB27A; it reads DDFLGNVVLR…AKRVQDHTTV (304 aa). Residues 557–677 enclose the MHD1 domain; sequence FQLYISLKEL…RLALVYCSLI (121 aa). The 108-residue stretch at 788 to 895 folds into the MHD2 domain; it reads EDAILPLMKF…ASSRELIRKY (108 aa). In terms of domain architecture, C2 2 spans 910-1035; it reads ELGAVTVKAS…PGLSGSEEPG (126 aa). The Ca(2+) site is built by Leu940, Asp941, Asp947, Asp1005, Asp1007, and Asp1013. The tract at residues 1026–1048 is disordered; the sequence is PGLSGSEEPGEVPQTRLPLTYPA.

The protein belongs to the unc-13 family. In terms of assembly, interacts with DOC2A. Interacts with RAB27A. Interacts with RHOG; the interaction increases RhoG affinity to the membrane lipids, targets UNC13D to membrane lipids and facilitates cytotoxic granule (CG) docking to the plasma membrane. The cofactor is Ca(2+). Expressed at high levels in spleen, thymus and leukocytes. Also expressed in lung and placenta, and at very low levels in brain, heart, skeletal muscle and kidney. Expressed in cytotoxic T-lymphocytes (CTL) and mast cells.

Its subcellular location is the cytoplasm. The protein localises to the membrane. It is found in the late endosome. It localises to the recycling endosome. The protein resides in the lysosome. Functionally, plays a role in cytotoxic granule exocytosis in lymphocytes. Required for both granule maturation and granule docking and priming at the immunologic synapse. Regulates assembly of recycling and late endosomal structures, leading to the formation of an endosomal exocytic compartment that fuses with perforin-containing granules at the immunologic synapse and licences them for exocytosis. Regulates Ca(2+)-dependent secretory lysosome exocytosis in mast cells. This is Protein unc-13 homolog D (UNC13D) from Homo sapiens (Human).